The following is a 148-amino-acid chain: Sec-independent protein translocase protein TatB (148 aa).

A helical membrane pass occupies residues 2 to 22 (FNDIGPLELVTLVVLAVLVFG). 2 stretches are compositionally biased toward basic and acidic residues: residues 100-110 (VTDAVHGRESE) and 128-148 (MTKKREQLEADERPPFDADAT). The interval 100–148 (VTDAVHGRESETSASSSSANGSAGGTVDMTKKREQLEADERPPFDADAT) is disordered.

It belongs to the TatB family. As to quaternary structure, the Tat system comprises two distinct complexes: a TatABC complex, containing multiple copies of TatA, TatB and TatC subunits, and a separate TatA complex, containing only TatA subunits. Substrates initially bind to the TatABC complex, which probably triggers association of the separate TatA complex to form the active translocon.

Its subcellular location is the cell membrane. Its function is as follows. Part of the twin-arginine translocation (Tat) system that transports large folded proteins containing a characteristic twin-arginine motif in their signal peptide across membranes. Together with TatC, TatB is part of a receptor directly interacting with Tat signal peptides. TatB may form an oligomeric binding site that transiently accommodates folded Tat precursor proteins before their translocation. This Streptomyces avermitilis (strain ATCC 31267 / DSM 46492 / JCM 5070 / NBRC 14893 / NCIMB 12804 / NRRL 8165 / MA-4680) protein is Sec-independent protein translocase protein TatB.